Consider the following 433-residue polypeptide: Divergent protein kinase domain 2B (433 aa).

The first 31 residues, 1 to 31 (MEPQLGPEAAALRPGWLALLLWVSALSCSFS), serve as a signal peptide directing secretion. An N-linked (GlcNAc...) asparagine glycan is attached at Asn-100.

It belongs to the DIPK family.

It localises to the secreted. This Homo sapiens (Human) protein is Divergent protein kinase domain 2B.